Consider the following 193-residue polypeptide: ATP-dependent Clp protease proteolytic subunit 1 (193 aa).

Ser98 serves as the catalytic Nucleophile. His123 is a catalytic residue.

This sequence belongs to the peptidase S14 family. Fourteen ClpP subunits assemble into 2 heptameric rings which stack back to back to give a disk-like structure with a central cavity, resembling the structure of eukaryotic proteasomes.

Its subcellular location is the cytoplasm. The catalysed reaction is Hydrolysis of proteins to small peptides in the presence of ATP and magnesium. alpha-casein is the usual test substrate. In the absence of ATP, only oligopeptides shorter than five residues are hydrolyzed (such as succinyl-Leu-Tyr-|-NHMec, and Leu-Tyr-Leu-|-Tyr-Trp, in which cleavage of the -Tyr-|-Leu- and -Tyr-|-Trp bonds also occurs).. Functionally, cleaves peptides in various proteins in a process that requires ATP hydrolysis. Has a chymotrypsin-like activity. Plays a major role in the degradation of misfolded proteins. This is ATP-dependent Clp protease proteolytic subunit 1 from Bacillus cereus (strain ATCC 10987 / NRS 248).